A 277-amino-acid polypeptide reads, in one-letter code: Membrane protein insertase YidC 2 (277 aa).

The N-terminal stretch at 1-22 (MKKYRKILAMLAVLAIVLVLSG) is a signal peptide. Cys23 carries the N-palmitoyl cysteine lipid modification. Cys23 carries the S-diacylglycerol cysteine lipid modification. A run of 5 helical transmembrane segments spans residues 35-55 (FWDG…SNLF), 60-80 (GLGI…LMIF), 130-150 (ASML…QAIW), 170-190 (PYYV…WLAM), and 208-228 (PVII…YWVI). Over residues 251 to 266 (EAKKQAERDRKRTLEK) the composition is skewed to basic and acidic residues. The segment at 251-277 (EAKKQAERDRKRTLEKARKRAIRNHKR) is disordered. Over residues 267-277 (ARKRAIRNHKR) the composition is skewed to basic residues.

Belongs to the OXA1/ALB3/YidC family. Type 2 subfamily.

It localises to the cell membrane. In terms of biological role, required for the insertion and/or proper folding and/or complex formation of integral membrane proteins into the membrane. Involved in integration of membrane proteins that insert both dependently and independently of the Sec translocase complex, as well as at least some lipoproteins. The sequence is that of Membrane protein insertase YidC 2 from Lactiplantibacillus plantarum (strain ATCC BAA-793 / NCIMB 8826 / WCFS1) (Lactobacillus plantarum).